Consider the following 172-residue polypeptide: Protein GrpE (172 aa).

It belongs to the GrpE family. As to quaternary structure, homodimer.

The protein resides in the cytoplasm. Its function is as follows. Participates actively in the response to hyperosmotic and heat shock by preventing the aggregation of stress-denatured proteins, in association with DnaK and GrpE. It is the nucleotide exchange factor for DnaK and may function as a thermosensor. Unfolded proteins bind initially to DnaJ; upon interaction with the DnaJ-bound protein, DnaK hydrolyzes its bound ATP, resulting in the formation of a stable complex. GrpE releases ADP from DnaK; ATP binding to DnaK triggers the release of the substrate protein, thus completing the reaction cycle. Several rounds of ATP-dependent interactions between DnaJ, DnaK and GrpE are required for fully efficient folding. This is Protein GrpE from Thermotoga maritima (strain ATCC 43589 / DSM 3109 / JCM 10099 / NBRC 100826 / MSB8).